A 956-amino-acid polypeptide reads, in one-letter code: Ubiquitin carboxyl-terminal hydrolase CYLD (956 aa).

Positions Cys-106–Gly-593 are interaction with TRIP. CAP-Gly domains lie at Leu-153–Ala-198 and Asp-253–Cys-286. The disordered stretch occupies residues Ser-309 to Glu-353. Over residues Gly-330 to Arg-349 the composition is skewed to polar residues. Position 387 is a phosphoserine (Ser-387). The interval Ser-392–Thr-411 is disordered. An interaction with TRAF2 region spans residues Asp-394 to Gly-469. 2 positions are modified to phosphoserine: Ser-418 and Ser-422. The tract at residues Leu-470–Gln-554 is interaction with IKBKG/NEMO. The CAP-Gly 3 domain occupies Gly-492–Lys-535. The USP domain occupies Lys-592–Pro-950. The active-site Nucleophile is the Cys-601. The B-box stretch occupies residues Leu-781 to His-833. Positions 788, 791, 799, 802, 817, 820, 825, and 833 each coordinate Zn(2+). His-871 serves as the catalytic Proton acceptor.

This sequence belongs to the peptidase C19 family. As to quaternary structure, interacts (via CAP-Gly domain) with IKBKG/NEMO (via proline-rich C-terminal region). Interacts with TRAF2 and TRIP. Interacts with PLK1, DVL1, DVL3, MAVS, TBK1, IKKE and RIGI. Interacts (via CAP-Gly domain) with microtubules. Interacts with HDAC6 and BCL3. Interacts with MAP3K7. Identified in a complex with TRAF6 and SQSTM1. Interacts with OPTN and SQSTM1. Interacts with CEP350. Interacts with RNF31; the interaction is indirect and is mediated via SPATA2. Interacts with SPATA2 (via the PUB domain); the interaction is direct and recruits CYLD to the LUBAC complex, thereby regulating TNF-alpha-induced necroptosis. Post-translationally, ubiquitinated. Polyubiquitinated in hepatocytes treated with palmitic acid. Ubiquitination is mediated by E3 ligase TRIM47 and leads to proteasomal degradation. Phosphorylated on several serine residues by IKKA and/or IKKB in response to immune stimuli. Phosphorylation requires IKBKG. Phosphorylation abolishes TRAF2 deubiquitination, interferes with the activation of Jun kinases, and strongly reduces CD40-dependent gene activation by NF-kappa-B. As to expression, detected in fetal brain, testis, and skeletal muscle, and at a lower level in adult brain, leukocytes, liver, heart, kidney, spleen, ovary and lung. Isoform 2 is found in all tissues except kidney.

The protein localises to the cytoplasm. The protein resides in the perinuclear region. Its subcellular location is the cytoskeleton. It is found in the cell membrane. It localises to the microtubule organizing center. The protein localises to the centrosome. The protein resides in the spindle. Its subcellular location is the cilium basal body. It catalyses the reaction Thiol-dependent hydrolysis of ester, thioester, amide, peptide and isopeptide bonds formed by the C-terminal Gly of ubiquitin (a 76-residue protein attached to proteins as an intracellular targeting signal).. Its activity is regulated as follows. Inhibited by phosphorylation at serine residues. Functionally, deubiquitinase that specifically cleaves 'Lys-63'- and linear 'Met-1'-linked polyubiquitin chains and is involved in NF-kappa-B activation and TNF-alpha-induced necroptosis. Negatively regulates NF-kappa-B activation by deubiquitinating upstream signaling factors. Contributes to the regulation of cell survival, proliferation and differentiation via its effects on NF-kappa-B activation. Negative regulator of Wnt signaling. Inhibits HDAC6 and thereby promotes acetylation of alpha-tubulin and stabilization of microtubules. Plays a role in the regulation of microtubule dynamics, and thereby contributes to the regulation of cell proliferation, cell polarization, cell migration, and angiogenesis. Required for normal cell cycle progress and normal cytokinesis. Inhibits nuclear translocation of NF-kappa-B. Plays a role in the regulation of inflammation and the innate immune response, via its effects on NF-kappa-B activation. Dispensable for the maturation of intrathymic natural killer cells, but required for the continued survival of immature natural killer cells. Negatively regulates TNFRSF11A signaling and osteoclastogenesis. Involved in the regulation of ciliogenesis, allowing ciliary basal bodies to migrate and dock to the plasma membrane; this process does not depend on NF-kappa-B activation. Ability to remove linear ('Met-1'-linked) polyubiquitin chains regulates innate immunity and TNF-alpha-induced necroptosis: recruited to the LUBAC complex via interaction with SPATA2 and restricts linear polyubiquitin formation on target proteins. Regulates innate immunity by restricting linear polyubiquitin formation on RIPK2 in response to NOD2 stimulation. Involved in TNF-alpha-induced necroptosis by removing linear ('Met-1'-linked) polyubiquitin chains from RIPK1, thereby regulating the kinase activity of RIPK1. Negatively regulates intestinal inflammation by removing 'Lys-63' linked polyubiquitin chain of NLRP6, thereby reducing the interaction between NLRP6 and PYCARD/ASC and formation of the NLRP6 inflammasome. Does not catalyze deubiquitination of heterotypic 'Lys-63'-/'Lys-48'-linked branched ubiquitin chains. Removes 'Lys-63' linked polyubiquitin chain of MAP3K7, which inhibits phosphorylation and blocks downstream activation of the JNK-p38 kinase cascades. Also removes 'Lys-63'-linked polyubiquitin chains of MAP3K1 and MA3P3K3, which inhibit their interaction with MAP2K1 and MAP2K2. In Homo sapiens (Human), this protein is Ubiquitin carboxyl-terminal hydrolase CYLD.